A 356-amino-acid chain; its full sequence is Glycerol-1-phosphate dehydrogenase [NAD(P)+] (356 aa).

NAD(+) is bound by residues 103-107 (GRSID) and 125-128 (TAAS). Residue D130 participates in substrate binding. Position 134 (S134) interacts with NAD(+). D177 serves as a coordination point for substrate. Residues D177 and H257 each coordinate Zn(2+). H261 is a binding site for substrate. H273 is a Zn(2+) binding site.

It belongs to the glycerol-1-phosphate dehydrogenase family. It depends on Zn(2+) as a cofactor.

The protein localises to the cytoplasm. It catalyses the reaction sn-glycerol 1-phosphate + NAD(+) = dihydroxyacetone phosphate + NADH + H(+). The enzyme catalyses sn-glycerol 1-phosphate + NADP(+) = dihydroxyacetone phosphate + NADPH + H(+). It functions in the pathway membrane lipid metabolism; glycerophospholipid metabolism. In terms of biological role, catalyzes the NAD(P)H-dependent reduction of dihydroxyacetonephosphate (DHAP or glycerone phosphate) to glycerol 1-phosphate (G1P). The G1P thus generated is used as the glycerophosphate backbone of phospholipids in the cellular membranes of Archaea. In Methanosarcina barkeri (strain Fusaro / DSM 804), this protein is Glycerol-1-phosphate dehydrogenase [NAD(P)+].